The primary structure comprises 182 residues: Protein canopy homolog 2 (182 aa).

The N-terminal stretch at 1 to 20 (MKGWGWLALLLGALLGTAWA) is a signal peptide. In terms of domain architecture, Saposin B-type spans 24-175 (QDLHCGACRA…KRTDLCDHAL (152 aa)). 3 cysteine pairs are disulfide-bonded: Cys28–Cys171, Cys31–Cys164, and Cys86–Cys137. Ser115 bears the Phosphoserine mark. Residues 179–182 (HDEL) carry the Prevents secretion from ER motif.

The protein belongs to the canopy family. Interacts with MYLIP/MIR. In terms of tissue distribution, expressed in different tissues. Highest levels are detected in adult placenta, liver and pancreas.

It is found in the endoplasmic reticulum. Its function is as follows. Positive regulator of neurite outgrowth by stabilizing myosin regulatory light chain (MRLC). It prevents MIR-mediated MRLC ubiquitination and its subsequent proteasomal degradation. This is Protein canopy homolog 2 (CNPY2) from Homo sapiens (Human).